Consider the following 165-residue polypeptide: Cystatin-like protein (165 aa).

Residues 1–19 (MDVALKLLLLAALTLLASA) form the signal peptide. Cystine bridges form between Cys-80–Cys-92 and Cys-104–Cys-118.

Its function is as follows. Involved in hypoxia tolerance. The sequence is that of Cystatin-like protein from Clarias batrachus (Walking catfish).